The chain runs to 301 residues: tRNA pseudouridine synthase B (301 aa).

The active-site Nucleophile is aspartate 38.

It belongs to the pseudouridine synthase TruB family. Type 1 subfamily.

The enzyme catalyses uridine(55) in tRNA = pseudouridine(55) in tRNA. In terms of biological role, responsible for synthesis of pseudouridine from uracil-55 in the psi GC loop of transfer RNAs. In Ehrlichia canis (strain Jake), this protein is tRNA pseudouridine synthase B.